A 173-amino-acid chain; its full sequence is Crossover junction endodeoxyribonuclease RuvC (173 aa).

Catalysis depends on residues D8, E67, and D139. The Mg(2+) site is built by D8, E67, and D139.

This sequence belongs to the RuvC family. In terms of assembly, homodimer which binds Holliday junction (HJ) DNA. The HJ becomes 2-fold symmetrical on binding to RuvC with unstacked arms; it has a different conformation from HJ DNA in complex with RuvA. In the full resolvosome a probable DNA-RuvA(4)-RuvB(12)-RuvC(2) complex forms which resolves the HJ. Requires Mg(2+) as cofactor.

It localises to the cytoplasm. It catalyses the reaction Endonucleolytic cleavage at a junction such as a reciprocal single-stranded crossover between two homologous DNA duplexes (Holliday junction).. Functionally, the RuvA-RuvB-RuvC complex processes Holliday junction (HJ) DNA during genetic recombination and DNA repair. Endonuclease that resolves HJ intermediates. Cleaves cruciform DNA by making single-stranded nicks across the HJ at symmetrical positions within the homologous arms, yielding a 5'-phosphate and a 3'-hydroxyl group; requires a central core of homology in the junction. The consensus cleavage sequence is 5'-(A/T)TT(C/G)-3'. Cleavage occurs on the 3'-side of the TT dinucleotide at the point of strand exchange. HJ branch migration catalyzed by RuvA-RuvB allows RuvC to scan DNA until it finds its consensus sequence, where it cleaves and resolves the cruciform DNA. This Vibrio atlanticus (strain LGP32) (Vibrio splendidus (strain Mel32)) protein is Crossover junction endodeoxyribonuclease RuvC.